Consider the following 325-residue polypeptide: MATH domain and coiled-coil domain-containing protein At3g58430 (325 aa).

The 126-residue stretch at 6–131 (HKKFCWIIKN…KGDFKIIAEV (126 aa)) folds into the MATH domain. Residues 258–306 (FKVDWLEKKLDQVKDKKEREQSGLARLHELEEYLLKLKQKCSNLDLLVE) are a coiled coil.

This is MATH domain and coiled-coil domain-containing protein At3g58430 from Arabidopsis thaliana (Mouse-ear cress).